A 610-amino-acid polypeptide reads, in one-letter code: E-selectin (610 aa).

Positions 1-21 are cleaved as a signal peptide; the sequence is MIASQFLSALTLVLLIKESGA. The C-type lectin domain maps to 22–138; it reads WSYSASTTNM…CNKKKLALCY (117 aa). Residues 22–555 are Extracellular-facing; it reads WSYSASTTNM…CEATAKSNIP (534 aa). N-linked (GlcNAc...) asparagine glycosylation is present at Asn-30. 19 cysteine pairs are disulfide-bonded: Cys-40/Cys-137, Cys-110/Cys-129, Cys-142/Cys-153, Cys-147/Cys-162, Cys-164/Cys-173, Cys-179/Cys-223, Cys-192/Cys-205, Cys-209/Cys-236, Cys-241/Cys-285, Cys-254/Cys-267, Cys-271/Cys-298, Cys-303/Cys-348, Cys-334/Cys-361, Cys-366/Cys-411, Cys-397/Cys-424, Cys-429/Cys-474, Cys-460/Cys-487, Cys-492/Cys-533, and Cys-519/Cys-546. Ca(2+) contacts are provided by Glu-101, Asn-103, and Glu-108. A carbohydrate-binding positions include 101 to 108, 112 to 117, and 125 to 127; these read EPNNKQNE, EIYIKR, and NDE. Ca(2+) contacts are provided by Asn-125 and Asp-126. The EGF-like domain occupies 139 to 174; sequence TAACTHTSCSGHGECVETINNYTCQCHPGFTGLRCE. An N-linked (GlcNAc...) asparagine glycan is attached at Asn-159. Sushi domains follow at residues 177-238, 239-300, 314-363, 365-426, 428-489, and 490-548; these read VTCQ…ACHV, VECD…TCKA, VNCS…VCKA, QCKA…TCEA, RCDA…SCQV, and VQCA…TCEA. N-linked (GlcNAc...) asparagine glycans are attached at residues Asn-198 and Asn-202. Asn-264 is a glycosylation site (N-linked (GlcNAc...) asparagine). N-linked (GlcNAc...) asparagine glycosylation is found at Asn-315, Asn-327, and Asn-331. N-linked (GlcNAc...) asparagine glycosylation occurs at Asn-526. A helical transmembrane segment spans residues 556–577; that stretch reads LTVGLSAAGTSLLTLASFLFWL. Residues 578–610 lie on the Cytoplasmic side of the membrane; sequence LKRLRRKAKKFVPASSYQSLQSDGSYQMPSESA.

It belongs to the selectin/LECAM family. In terms of assembly, interacts with SELPLG/PSGL1 and PODXL2 through the sialyl Lewis X epitope. SELPLG sulfation appears not to be required for this interaction.

It localises to the cell membrane. In terms of biological role, cell-surface glycoprotein having a role in immunoadhesion. Mediates in the adhesion of blood neutrophils in cytokine-activated endothelium through interaction with SELPLG/PSGL1. May have a role in capillary morphogenesis. The sequence is that of E-selectin (SELE) from Equus caballus (Horse).